The chain runs to 277 residues: Glutamate racemase (277 aa).

Residues 13-14 and 45-46 each bind substrate; these read DS and YG. Cys76 functions as the Proton donor/acceptor in the catalytic mechanism. 77–78 is a binding site for substrate; sequence NT. Cys186 functions as the Proton donor/acceptor in the catalytic mechanism. 187 to 188 lines the substrate pocket; the sequence is TH.

This sequence belongs to the aspartate/glutamate racemases family.

It catalyses the reaction L-glutamate = D-glutamate. Its pathway is cell wall biogenesis; peptidoglycan biosynthesis. In terms of biological role, provides the (R)-glutamate required for cell wall biosynthesis. In Ralstonia nicotianae (strain ATCC BAA-1114 / GMI1000) (Ralstonia solanacearum), this protein is Glutamate racemase.